The following is a 401-amino-acid chain: Beta-lactamase (401 aa).

Residues 1 to 39 (MKLFTSTLTAKKSSTHKPLISLALSVLISTLLISETAQA) form the signal peptide. The active-site Acyl-ester intermediate is the Ser102. Catalysis depends on Tyr188, which acts as the Proton acceptor. 353–355 (KTG) lines the substrate pocket.

It belongs to the class-C beta-lactamase family.

The protein resides in the secreted. The enzyme catalyses a beta-lactam + H2O = a substituted beta-amino acid. This protein is a serine beta-lactamase with a substrate specificity for cephalosporins. This chain is Beta-lactamase (ampC), found in Psychrobacter immobilis.